Consider the following 2431-residue polypeptide: Reducing polyketide synthase rads1 (2431 aa).

Residues 10–440 (RAPIAIIGLA…GTNAHIVLER (431 aa)) form the Ketosynthase family 3 (KS3) domain. Active-site for beta-ketoacyl synthase activity residues include cysteine 184, histidine 319, and histidine 363. The malonyl-CoA:ACP transacylase (MAT) domain stretch occupies residues 558-895 (FVFTGQGAQW…NLAAELFRRG (338 aa)). The interval 944-1080 (KSILGAELPS…GLISIAYEDT (137 aa)) is N-terminal hotdog fold. Positions 944–1267 (KSILGAELPS…LAELEVDDAA (324 aa)) constitute a PKS/mFAS DH domain. The dehydratase (DH) domain stretch occupies residues 946 to 1264 (ILGAELPSMD…DFRLAELEVD (319 aa)). Histidine 976 (proton acceptor; for dehydratase activity) is an active-site residue. A C-terminal hotdog fold region spans residues 1108–1267 (PETCSKERFY…LAELEVDDAA (160 aa)). The active-site Proton donor; for dehydratase activity is aspartate 1174. The tract at residues 1705–2023 (GLLNTLHFVP…QGKHLGKMIL (319 aa)) is enoyl reductase (ER) domain. Cysteine 1822 serves as the catalytic Phosphocysteine intermediate. The ketoreductase (KR) domain stretch occupies residues 2048 to 2228 (ATYLIVGGLG…VSVNLGIMRD (181 aa)). One can recognise a Carrier domain in the interval 2346–2423 (VAAAIITEAL…TFAVQIAKKS (78 aa)). Serine 2383 carries the post-translational modification O-(pantetheine 4'-phosphoryl)serine.

The protein operates within secondary metabolite biosynthesis. In terms of biological role, reducing polyketide synthase; part of the gene cluster that mediates the biosynthesis of radicicol, a resorcylic acid lactone (RAL) that irreversibly inhibits the HSP90 molecular chaperone, an important target for cancer chemotherapy. The cluster encodes only two apparent post-PKS enzymes, a cytochrome P450 monooxygenase (radP) and a non-heme halogenase (radH) that introduce the epoxide and the chlorine, respectively. If this cluster includes all the genes required for radicicol biosynthesis, the remaining structural features of radicicol are presumably generated by the PKSs rads1 and rads2. The C-2' ketone could arise if the R-PKS rads1 and NR-PKS rads2 each carry out four iterations, in contrast to the five iteration-three iteration split for the hypothemycin PKSs. The origin of the cis 5',6' double bond is not known. The radicicol R-PKS radS1 ER domain may catalyze either double bond isomerization or reduction in the third iteration. In Floropilus chiversii (Chaetomium chiversii), this protein is Reducing polyketide synthase rads1.